Consider the following 429-residue polypeptide: Polypyrimidine tract-binding protein homolog 2 (429 aa).

At S2 the chain carries N-acetylserine. RRM domains lie at 18–96 (KVLH…YSNR), 110–197 (GNVL…YSAH), and 243–323 (SNVL…YSRH). The interval 331-429 (NNDRSRDYTM…QHYGGPGPMH (99 aa)) is disordered. Low complexity predominate over residues 367–381 (GGSHHQQQQQPQGGW). Residues 382–397 (VQPGGQGSMGMGGGGH) are compositionally biased toward gly residues.

Its subcellular location is the nucleus. Plays a role in pre-mRNA splicing. Binds to the polypyrimidine tract of introns. May promote the binding of U2 snRNP to pre-mRNA. This is Polypyrimidine tract-binding protein homolog 2 from Arabidopsis thaliana (Mouse-ear cress).